The primary structure comprises 610 residues: Glutamine--fructose-6-phosphate aminotransferase [isomerizing] (610 aa).

The Nucleophile; for GATase activity role is filled by Cys-2. Positions 2–218 (CGIVGAVAQR…EGDVAEITRR (217 aa)) constitute a Glutamine amidotransferase type-2 domain. SIS domains follow at residues 286-426 (AADI…EQGR) and 459-600 (LATD…VDQP). The active-site For Fru-6P isomerization activity is the Lys-605.

As to quaternary structure, homodimer.

It localises to the cytoplasm. It catalyses the reaction D-fructose 6-phosphate + L-glutamine = D-glucosamine 6-phosphate + L-glutamate. In terms of biological role, catalyzes the first step in hexosamine metabolism, converting fructose-6P into glucosamine-6P using glutamine as a nitrogen source. The chain is Glutamine--fructose-6-phosphate aminotransferase [isomerizing] from Vibrio parahaemolyticus serotype O3:K6 (strain RIMD 2210633).